The primary structure comprises 166 residues: Small ribosomal subunit protein uS5 (166 aa).

Residues Leu11–Val74 form the S5 DRBM domain.

The protein belongs to the universal ribosomal protein uS5 family. As to quaternary structure, part of the 30S ribosomal subunit. Contacts proteins S4 and S8.

In terms of biological role, with S4 and S12 plays an important role in translational accuracy. Functionally, located at the back of the 30S subunit body where it stabilizes the conformation of the head with respect to the body. This chain is Small ribosomal subunit protein uS5, found in Aeromonas hydrophila subsp. hydrophila (strain ATCC 7966 / DSM 30187 / BCRC 13018 / CCUG 14551 / JCM 1027 / KCTC 2358 / NCIMB 9240 / NCTC 8049).